The chain runs to 351 residues: N-acetyl-gamma-glutamyl-phosphate reductase (351 aa).

C154 is an active-site residue.

Belongs to the NAGSA dehydrogenase family. Type 1 subfamily.

The protein resides in the cytoplasm. The catalysed reaction is N-acetyl-L-glutamate 5-semialdehyde + phosphate + NADP(+) = N-acetyl-L-glutamyl 5-phosphate + NADPH + H(+). It participates in amino-acid biosynthesis; L-arginine biosynthesis; N(2)-acetyl-L-ornithine from L-glutamate: step 3/4. Its function is as follows. Catalyzes the NADPH-dependent reduction of N-acetyl-5-glutamyl phosphate to yield N-acetyl-L-glutamate 5-semialdehyde. In Synechocystis sp. (strain ATCC 27184 / PCC 6803 / Kazusa), this protein is N-acetyl-gamma-glutamyl-phosphate reductase.